A 193-amino-acid polypeptide reads, in one-letter code: ATP-dependent Clp protease proteolytic subunit 2 (193 aa).

Catalysis depends on S98, which acts as the Nucleophile. H123 is a catalytic residue.

The protein belongs to the peptidase S14 family. As to quaternary structure, fourteen ClpP subunits assemble into 2 heptameric rings which stack back to back to give a disk-like structure with a central cavity, resembling the structure of eukaryotic proteasomes.

The protein resides in the cytoplasm. The catalysed reaction is Hydrolysis of proteins to small peptides in the presence of ATP and magnesium. alpha-casein is the usual test substrate. In the absence of ATP, only oligopeptides shorter than five residues are hydrolyzed (such as succinyl-Leu-Tyr-|-NHMec, and Leu-Tyr-Leu-|-Tyr-Trp, in which cleavage of the -Tyr-|-Leu- and -Tyr-|-Trp bonds also occurs).. Functionally, cleaves peptides in various proteins in a process that requires ATP hydrolysis. Has a chymotrypsin-like activity. Plays a major role in the degradation of misfolded proteins. The sequence is that of ATP-dependent Clp protease proteolytic subunit 2 from Bacillus anthracis.